Reading from the N-terminus, the 67-residue chain is METGVVKWFNAEKGYGFITPEAGGKDLFAHFSEIQANGFKSLEENQRVSFVTAMGPKGPQATKIQIL.

A CSD domain is found at Gly4 to Ile64.

It is found in the cytoplasm. This is Cold shock-like protein CspA (cspA) from Bordetella bronchiseptica (strain ATCC BAA-588 / NCTC 13252 / RB50) (Alcaligenes bronchisepticus).